The following is a 425-amino-acid chain: Alpha-muurolene synthase (425 aa).

The Mg(2+) site is built by Asp97, Asp101, Asn240, Ser244, and Glu248. The DDXXD motif signature appears at 97 to 101 (DNISD). Positions 348–382 (VAPPPPPPPPTPPPQSSDADTKKQKVKAQDGKGPV) are disordered. Residues 349 to 362 (APPPPPPPPTPPPQ) are compositionally biased toward pro residues. Residues 366 to 377 (ADTKKQKVKAQD) are compositionally biased toward basic and acidic residues.

Belongs to the terpene synthase family. Requires Mg(2+) as cofactor.

The catalysed reaction is (2E,6E)-farnesyl diphosphate = alpha-muurolene + diphosphate. It carries out the reaction (2E,6E)-farnesyl diphosphate = gamma-muurolene + diphosphate. The enzyme catalyses (2E,6E)-farnesyl diphosphate = (+)-(R)-germacrene A + diphosphate. Functionally, sesquiterpene synthase that catalyzes the formation of alpha-muurolene, and at lower level (+)-(R)-germacrene A and gamma-muurolene. The polypeptide is Alpha-muurolene synthase (COP3) (Coprinopsis cinerea (strain Okayama-7 / 130 / ATCC MYA-4618 / FGSC 9003) (Inky cap fungus)).